Reading from the N-terminus, the 191-residue chain is GTP cyclohydrolase 1 (191 aa).

Residues Cys-80, His-83, and Cys-151 each contribute to the Zn(2+) site.

It belongs to the GTP cyclohydrolase I family. Toroid-shaped homodecamer, composed of two pentamers of five dimers.

It catalyses the reaction GTP + H2O = 7,8-dihydroneopterin 3'-triphosphate + formate + H(+). The protein operates within cofactor biosynthesis; 7,8-dihydroneopterin triphosphate biosynthesis; 7,8-dihydroneopterin triphosphate from GTP: step 1/1. In Nitrosospira multiformis (strain ATCC 25196 / NCIMB 11849 / C 71), this protein is GTP cyclohydrolase 1.